The chain runs to 754 residues: Carbon catabolite repressor protein 4 homolog 6 (754 aa).

Disordered stretches follow at residues 34–65 (PYRGARGRGRGRGGRSFSDRPYNDDAGRDQFV) and 85–176 (EPYR…KTPP). A compositionally biased stretch (basic and acidic residues) spans 50–61 (FSDRPYNDDAGR). Polar residues-rich tracts occupy residues 96-106 (QRQQPPFNQNY) and 116-133 (GQWQQFRQPNQFPSNQNY). Residues 162–171 (KPSDYREWEY) are compositionally biased toward basic and acidic residues. Mg(2+) is bound at residue E237. 2 disordered regions span residues 404-431 (VSAEFRPPRPENYTTRYQSANKSPQGQV) and 494-558 (IENR…DQDI). Polar residues-rich tracts occupy residues 415–431 (NYTTRYQSANKSPQGQV), 503–525 (GNLSTAEDLSSLTISDTEPQHAS), and 534–545 (DRSVSSGLSETE).

Belongs to the CCR4/nocturin family. Component of the CCR4-NOT complex, at least composed of CRR4 and CAF1 proteins. Mg(2+) is required as a cofactor.

Its subcellular location is the nucleus. The protein localises to the cytoplasm. The enzyme catalyses Exonucleolytic cleavage of poly(A) to 5'-AMP.. Acts as a catalytic component of the CCR4-NOT core complex, which in the nucleus seems to be a general transcription factor, and in the cytoplasm the major mRNA deadenylase involved in mRNA turnover. The chain is Carbon catabolite repressor protein 4 homolog 6 (CCR4-6) from Arabidopsis thaliana (Mouse-ear cress).